The chain runs to 298 residues: Protoheme IX farnesyltransferase (298 aa).

The next 9 helical transmembrane spans lie at 29 to 49 (LIVFTAMIGMCLATPDFPPLL), 51 to 71 (FGVASLGIALVSFAAAALNCL), 97 to 117 (ETVTLATALGAAGLWLLHGFI), 120 to 140 (LTMWLTLATFVGYTVIYTLIL), 148 to 168 (IVIGGASGAMPPLLGWTAMTG), 175 to 195 (LVLFLIIFLWTPPHFWALACY), 221 to 241 (ILWYTLMLAAASLIPVSLGMS), 243 to 263 (GFYLIAIGLLDLVFLGYAIAL), and 278 to 298 (YSILYLTLLFAALFADRLIVL).

It belongs to the UbiA prenyltransferase family. Protoheme IX farnesyltransferase subfamily.

The protein localises to the cell inner membrane. The enzyme catalyses heme b + (2E,6E)-farnesyl diphosphate + H2O = Fe(II)-heme o + diphosphate. Its pathway is porphyrin-containing compound metabolism; heme O biosynthesis; heme O from protoheme: step 1/1. In terms of biological role, converts heme B (protoheme IX) to heme O by substitution of the vinyl group on carbon 2 of heme B porphyrin ring with a hydroxyethyl farnesyl side group. The sequence is that of Protoheme IX farnesyltransferase from Dechloromonas aromatica (strain RCB).